A 603-amino-acid polypeptide reads, in one-letter code: NADH-quinone oxidoreductase subunit C/D (603 aa).

The NADH dehydrogenase I subunit C stretch occupies residues 1–193 (MVNNMTDLTA…DPFTLTKQKE (193 aa)). The NADH dehydrogenase I subunit D stretch occupies residues 217-603 (DFMFLNLGPN…IDFVMSDVDR (387 aa)).

In the N-terminal section; belongs to the complex I 30 kDa subunit family. It in the C-terminal section; belongs to the complex I 49 kDa subunit family. As to quaternary structure, NDH-1 is composed of 13 different subunits. Subunits NuoB, CD, E, F, and G constitute the peripheral sector of the complex.

It localises to the cell inner membrane. The enzyme catalyses a quinone + NADH + 5 H(+)(in) = a quinol + NAD(+) + 4 H(+)(out). Its function is as follows. NDH-1 shuttles electrons from NADH, via FMN and iron-sulfur (Fe-S) centers, to quinones in the respiratory chain. The immediate electron acceptor for the enzyme in this species is believed to be ubiquinone. Couples the redox reaction to proton translocation (for every two electrons transferred, four hydrogen ions are translocated across the cytoplasmic membrane), and thus conserves the redox energy in a proton gradient. In Cronobacter sakazakii (strain ATCC BAA-894) (Enterobacter sakazakii), this protein is NADH-quinone oxidoreductase subunit C/D.